A 393-amino-acid polypeptide reads, in one-letter code: MSVPTIREVRAYVVRGGGGDYHDQQGTHWIDDHIATPMSKYPAYRQSRRTFGINVLGTLVVEVEASDGTVGFAVTTGGEPAAWIVEKHLARFIEGAKITDIELMWDQMYRSTLYYGRKGLVVNTISGVDLALWDLLAKWRKEPVYHLLGGAVRDELQFYATGARPDLAKEMGFIGGKMALHHGPAEGEEGLRKNLDILNDMRNKVGKDFWLMQDCWMALDVEYATRFSTIAWNEMGLKWTEEALPPDDYWGYAALKKNAPKGHLITTGEHEATRWGFKMLLDMECCDIIQPDVGWCGGITELIKITALADAAGVLVVPHGSSVYSYHFVITRHNSPFAEFLMMHPVPDQVVPMFTPLLLDEPVPVNGRLKLDDTPGFGVRLNPECKLSRPYTH.

2 residues coordinate substrate: histidine 22 and arginine 48. 3 residues coordinate Mg(2+): aspartate 214, glutamate 241, and glutamate 269. Histidine 319 acts as the Proton acceptor in catalysis. Position 339 (glutamate 339) interacts with substrate.

This sequence belongs to the mandelate racemase/muconate lactonizing enzyme family. RhamD subfamily. In terms of assembly, homooctamer; tetramer of dimers. Mg(2+) serves as cofactor.

The catalysed reaction is L-rhamnonate = 2-dehydro-3-deoxy-L-rhamnonate + H2O. Catalyzes the dehydration of L-rhamnonate to 2-keto-3-deoxy-L-rhamnonate (KDR). The polypeptide is L-rhamnonate dehydratase (Azorhizobium caulinodans (strain ATCC 43989 / DSM 5975 / JCM 20966 / LMG 6465 / NBRC 14845 / NCIMB 13405 / ORS 571)).